Consider the following 235-residue polypeptide: Sugar fermentation stimulation protein homolog (235 aa).

The protein belongs to the SfsA family.

The polypeptide is Sugar fermentation stimulation protein homolog (Ectopseudomonas mendocina (strain ymp) (Pseudomonas mendocina)).